Here is a 745-residue protein sequence, read N- to C-terminus: Dipeptidyl aminopeptidase 4 (745 aa).

The N-terminal stretch at 1-22 is a signal peptide; sequence MRLALFALFALMTVATALPAHA. Substrate contacts are provided by glutamate 208 and glutamate 209. Residues serine 613, aspartate 689, and histidine 721 each act as charge relay system in the active site.

This sequence belongs to the peptidase S9B family. Homodimer.

It is found in the cytoplasm. It localises to the periplasm. The enzyme catalyses Release of an N-terminal dipeptide, Xaa-Yaa-|-Zaa-, from a polypeptide, preferentially when Yaa is Pro, provided Zaa is neither Pro nor hydroxyproline.. With respect to regulation, completely inhibited by the serine protease inhibitor diisopropyl fluorophosphate (DFP) and moderately by N-tosyl-L-phenyl-alanyl chloromethyl ketone (TPCK). Somewhat inhibited by phenylmethanesulfonyl fluoride (PMSF). Activity is not affected by thiol- or metalloprotease inhibitors, such as iodoacetate (IAA), EDTA, N-tosyl-L-lysyl chloromethyl ketone (TLCK), o-phenanthlorine, N-ethylmaleimide (NEM) or dithiothreitol (DTT). Its function is as follows. Catalyzes the sequential release of Tyr-Pro, Phe-Pro and Gly-Pro from the N-terminus of peptides and proteins. Is able to cleaves bioactive peptide beta-casomorphin. The polypeptide is Dipeptidyl aminopeptidase 4 (Pseudoxanthomonas mexicana).